The chain runs to 506 residues: WD repeat-containing protein 55 homolog (506 aa).

Basic and acidic residues predominate over residues 1–11 (MHRHDCFKTPA). Disordered regions lie at residues 1-20 (MHRHDCFKTPADEDELDDID), 33-87 (QEVL…SDDS), and 100-132 (AKRRKEQNAMDGAEPSGSGPSGSGDYSHLDEDD). Residues 33-48 (QEVLNESESDDDEYDL) show a composition bias toward acidic residues. A compositionally biased stretch (low complexity) spans 61–74 (GNISSNESISSDGS). Residues 78-87 (NAEDTDSDDS) show a composition bias toward acidic residues. WD repeat units follow at residues 156-195 (RLEDFITDICFHPERDIIALATIIGDVHLYEYGNEENKLL), 200-239 (VHAKACRDVEFTEDGRSLITCSKDKCVMVTDMETEKLKKL), 243-281 (AHDDAINKLHVLDERLFATGDDAGTVKLWDFRTKDAIFE), 284-323 (EVEDQITQMLTNEQNKLLLATSADGYLTTFNIGARKLYVQ), 326-365 (PYEEELNCMGIYRGSSKLVVGTSKGRLYTYNWGYFGYHCD), and 410-449 (QHNMPIESLDINSSGELLASSSHNNDVRFWNVKYFEDFGD). The interval 480 to 506 (DMTKEQDDDDNDDGGNNTTAAGSNNVT) is disordered. Residues 493 to 506 (GGNNTTAAGSNNVT) are compositionally biased toward low complexity.

The protein belongs to the WD repeat WDR55 family.

The sequence is that of WD repeat-containing protein 55 homolog from Drosophila mojavensis (Fruit fly).